The primary structure comprises 336 residues: tRNA N6-adenosine threonylcarbamoyltransferase (336 aa).

Positions 114 and 118 each coordinate Fe cation. Residues leucine 136–glycine 140, aspartate 169, glycine 182, aspartate 186, and asparagine 275 contribute to the substrate site. Aspartate 301 contributes to the Fe cation binding site.

The protein belongs to the KAE1 / TsaD family. It depends on Fe(2+) as a cofactor.

The protein localises to the cytoplasm. It catalyses the reaction L-threonylcarbamoyladenylate + adenosine(37) in tRNA = N(6)-L-threonylcarbamoyladenosine(37) in tRNA + AMP + H(+). Its function is as follows. Required for the formation of a threonylcarbamoyl group on adenosine at position 37 (t(6)A37) in tRNAs that read codons beginning with adenine. Is involved in the transfer of the threonylcarbamoyl moiety of threonylcarbamoyl-AMP (TC-AMP) to the N6 group of A37, together with TsaE and TsaB. TsaD likely plays a direct catalytic role in this reaction. The polypeptide is tRNA N6-adenosine threonylcarbamoyltransferase (Streptococcus pneumoniae (strain CGSP14)).